Here is a 264-residue protein sequence, read N- to C-terminus: 4-hydroxy-tetrahydrodipicolinate reductase (264 aa).

8 to 13 provides a ligand contact to NAD(+); the sequence is GPRGKM. An NADP(+)-binding site is contributed by Lys-36. Residues 97 to 99 and 123 to 126 each bind NAD(+); these read GTT and APNF. His-153 functions as the Proton donor/acceptor in the catalytic mechanism. His-154 is a binding site for (S)-2,3,4,5-tetrahydrodipicolinate. Residue Lys-157 is the Proton donor of the active site. 163 to 164 provides a ligand contact to (S)-2,3,4,5-tetrahydrodipicolinate; that stretch reads GT.

Belongs to the DapB family.

Its subcellular location is the cytoplasm. It carries out the reaction (S)-2,3,4,5-tetrahydrodipicolinate + NAD(+) + H2O = (2S,4S)-4-hydroxy-2,3,4,5-tetrahydrodipicolinate + NADH + H(+). The catalysed reaction is (S)-2,3,4,5-tetrahydrodipicolinate + NADP(+) + H2O = (2S,4S)-4-hydroxy-2,3,4,5-tetrahydrodipicolinate + NADPH + H(+). Its pathway is amino-acid biosynthesis; L-lysine biosynthesis via DAP pathway; (S)-tetrahydrodipicolinate from L-aspartate: step 4/4. Functionally, catalyzes the conversion of 4-hydroxy-tetrahydrodipicolinate (HTPA) to tetrahydrodipicolinate. The protein is 4-hydroxy-tetrahydrodipicolinate reductase of Halalkalibacterium halodurans (strain ATCC BAA-125 / DSM 18197 / FERM 7344 / JCM 9153 / C-125) (Bacillus halodurans).